Here is an 801-residue protein sequence, read N- to C-terminus: Phenylalanine--tRNA ligase beta subunit (801 aa).

In terms of domain architecture, tRNA-binding spans 39-153 (AEGLSKLVVG…DEAVPGDAIF (115 aa)). The B5 domain maps to 406 to 481 (TEPVEVSTNL…RIYGYDKLPT (76 aa)). Mg(2+)-binding residues include Asp459, Asp465, Glu468, and Glu469. The 94-residue stretch at 708-801 (TKFPAMTRDI…LTEQVGAEVR (94 aa)) folds into the FDX-ACB domain.

The protein belongs to the phenylalanyl-tRNA synthetase beta subunit family. Type 1 subfamily. Tetramer of two alpha and two beta subunits. Mg(2+) serves as cofactor.

Its subcellular location is the cytoplasm. It carries out the reaction tRNA(Phe) + L-phenylalanine + ATP = L-phenylalanyl-tRNA(Phe) + AMP + diphosphate + H(+). In Streptococcus pyogenes serotype M3 (strain SSI-1), this protein is Phenylalanine--tRNA ligase beta subunit.